A 131-amino-acid polypeptide reads, in one-letter code: ATP synthase epsilon chain (131 aa).

The protein belongs to the ATPase epsilon chain family. In terms of assembly, F-type ATPases have 2 components, CF(1) - the catalytic core - and CF(0) - the membrane proton channel. CF(1) has five subunits: alpha(3), beta(3), gamma(1), delta(1), epsilon(1). CF(0) has three main subunits: a, b and c.

The protein localises to the cell inner membrane. In terms of biological role, produces ATP from ADP in the presence of a proton gradient across the membrane. This Helicobacter hepaticus (strain ATCC 51449 / 3B1) protein is ATP synthase epsilon chain.